Reading from the N-terminus, the 100-residue chain is Urease subunit gamma (100 aa).

The protein belongs to the urease gamma subunit family. Heterotrimer of UreA (gamma), UreB (beta) and UreC (alpha) subunits. Three heterotrimers associate to form the active enzyme.

It is found in the cytoplasm. It catalyses the reaction urea + 2 H2O + H(+) = hydrogencarbonate + 2 NH4(+). It functions in the pathway nitrogen metabolism; urea degradation; CO(2) and NH(3) from urea (urease route): step 1/1. In Haemophilus influenzae (strain PittEE), this protein is Urease subunit gamma.